Consider the following 159-residue polypeptide: 2-C-methyl-D-erythritol 2,4-cyclodiphosphate synthase (159 aa).

A divalent metal cation contacts are provided by Asp10 and His12. 4-CDP-2-C-methyl-D-erythritol 2-phosphate contacts are provided by residues 10 to 12 and 36 to 37; these read DVH and HS. His44 is a binding site for a divalent metal cation. 4-CDP-2-C-methyl-D-erythritol 2-phosphate is bound by residues 58-60, 63-67, 102-108, 134-137, Phe141, and Arg144; these read DIG, FPDTD, AQAPRMA, and TTSE.

Belongs to the IspF family. As to quaternary structure, homotrimer. A divalent metal cation is required as a cofactor.

The catalysed reaction is 4-CDP-2-C-methyl-D-erythritol 2-phosphate = 2-C-methyl-D-erythritol 2,4-cyclic diphosphate + CMP. It participates in isoprenoid biosynthesis; isopentenyl diphosphate biosynthesis via DXP pathway; isopentenyl diphosphate from 1-deoxy-D-xylulose 5-phosphate: step 4/6. Its function is as follows. Involved in the biosynthesis of isopentenyl diphosphate (IPP) and dimethylallyl diphosphate (DMAPP), two major building blocks of isoprenoid compounds. Catalyzes the conversion of 4-diphosphocytidyl-2-C-methyl-D-erythritol 2-phosphate (CDP-ME2P) to 2-C-methyl-D-erythritol 2,4-cyclodiphosphate (ME-CPP) with a corresponding release of cytidine 5-monophosphate (CMP). This chain is 2-C-methyl-D-erythritol 2,4-cyclodiphosphate synthase, found in Cellvibrio japonicus (strain Ueda107) (Pseudomonas fluorescens subsp. cellulosa).